Consider the following 153-residue polypeptide: L-alanine exporter AlaE (153 aa).

A run of 4 helical transmembrane segments spans residues 16–36 (VAMV…LSEM), 42–62 (LSSR…YGLY), 86–106 (LFAY…AIGA), and 114–134 (AVGS…YFLE).

It belongs to the AlaE exporter family.

Its subcellular location is the cell inner membrane. Exports L-alanine. The protein is L-alanine exporter AlaE of Musicola paradisiaca (strain Ech703) (Dickeya paradisiaca).